The chain runs to 159 residues: Ribosomal RNA large subunit methyltransferase H (159 aa).

Residues G108 and 127 to 132 contribute to the S-adenosyl-L-methionine site; that span reads FGKLTM.

It belongs to the RNA methyltransferase RlmH family. In terms of assembly, homodimer.

It localises to the cytoplasm. It catalyses the reaction pseudouridine(1915) in 23S rRNA + S-adenosyl-L-methionine = N(3)-methylpseudouridine(1915) in 23S rRNA + S-adenosyl-L-homocysteine + H(+). Specifically methylates the pseudouridine at position 1915 (m3Psi1915) in 23S rRNA. The chain is Ribosomal RNA large subunit methyltransferase H from Lactobacillus acidophilus (strain ATCC 700396 / NCK56 / N2 / NCFM).